A 476-amino-acid chain; its full sequence is MIQVLLVIICLADFPYQGTSIILESGNVNDYEVVYPRKVTALPKGAVQPKYEDAMQYEFKVNGEPVVLHLEKNKGLFSKGYSETHYSPDGRKITTNPPVEDHCYYHGRIQNDADSTASISACNGLKGHFKHQGEMYLIEPLKLSDSEAHAVYKYENVEKEDEAPKMCGVTQTNWKSDEPIKASQQQRFPQRYIELVVVADHGMFTKYDSNLDTIRTWVHELVNSINEFYRSLNIDVSLTELEIWSNQDLINVQSAAGDTLEAFGDWRETDLLNRISHDNAQLLTATELDGNTIGLAHVASMCDPKRSTGVVQDHSAINLLVAVTMAHETGHNLGMNHDGNQCHCGANSCVMGDVLSEGVSYEFSDCSENEYQTYLTDRNPQCILNEPLRTDTVSTPVSGNELLEAGKECDCGAPANPCCDAETCKLRPGQQCAEGLCCDQCRFMKEGTICQEAKGDWNDDTCNGISAGCPRNGFYG.

Residues 1-20 (MIQVLLVIICLADFPYQGTS) form the signal peptide. A propeptide spanning residues 21–184 (IILESGNVND…KSDEPIKASQ (164 aa)) is cleaved from the precursor. Gln185 is modified (pyrrolidone carboxylic acid). Residues 191 to 387 (RYIELVVVAD…RNPQCILNEP (197 aa)) form the Peptidase M12B domain. Ca(2+)-binding residues include Glu194 and Asp278. Intrachain disulfides connect Cys302–Cys382, Cys342–Cys366, and Cys344–Cys349. His327 serves as a coordination point for Zn(2+). Glu328 is an active-site residue. His331 and His337 together coordinate Zn(2+). Positions 382 and 385 each coordinate Ca(2+). Positions 388-403 (LRTDTVSTPVSGNELL) are excised as a propeptide. The Disintegrin domain occupies 395–476 (TPVSGNELLE…AGCPRNGFYG (82 aa)). Intrachain disulfides connect Cys409/Cys424, Cys411/Cys419, Cys418/Cys441, Cys432/Cys438, Cys437/Cys462, and Cys450/Cys469. A Cell attachment site motif is present at residues 454–456 (KGD).

This sequence belongs to the venom metalloproteinase (M12B) family. P-II subfamily. P-IId sub-subfamily. In terms of assembly, homodimer; disulfide-linked (disintegrin). Zn(2+) serves as cofactor. Expressed by the venom gland.

It localises to the secreted. Its activity is regulated as follows. The metalloproteinase is inhibited by EDTA, o-phenanthroline, and cysteine. Glutathione does not inhibit the enzymatic activity. Shows weak degradation of alpha-fibrinogen, but has no activity on beta- and gamma-chains. Digests luteinizing hormone-releasing hormone (LH-RH) and oxidized insulin at X-Leu, X-Phe, and X-Val bonds as well as X-His bond. Does not show fibrinogen-clotting activity. Does not show hemorrhagic activity. Its function is as follows. Inhibits ADP-induced platelet aggregation. The sequence is that of Zinc metalloproteinase/disintegrin from Gloydius brevicauda (Korean slamosa snake).